The sequence spans 161 residues: Transcriptional repressor NrdR (161 aa).

The tract at residues 1–23 (MRCPFCGHPDTQVKDSRPAEDGN) is disordered. The segment at 3-34 (CPFCGHPDTQVKDSRPAEDGNAIRRRRQCPSC) is a zinc-finger region. The span at 11–23 (TQVKDSRPAEDGN) shows a compositional bias: basic and acidic residues. The ATP-cone domain occupies 49 to 139 (LTVMKKSGRR…VYKDFHKVED (91 aa)).

The protein belongs to the NrdR family. The cofactor is Zn(2+).

Its function is as follows. Negatively regulates transcription of bacterial ribonucleotide reductase nrd genes and operons by binding to NrdR-boxes. The chain is Transcriptional repressor NrdR from Maricaulis maris (strain MCS10) (Caulobacter maris).